The primary structure comprises 995 residues: Aconitate hydratase 2, mitochondrial (995 aa).

A mitochondrion-targeting transit peptide spans 1-83 (MYRRATSGVR…PASLRAQARN (83 aa)). Residues glutamine 187 and 306 to 308 (DSH) each bind substrate. [4Fe-4S] cluster contacts are provided by cysteine 538, cysteine 604, and cysteine 607. Substrate-binding positions include arginine 637, arginine 642, arginine 800, and 881–882 (SR).

The protein belongs to the aconitase/IPM isomerase family. Monomer. Requires [4Fe-4S] cluster as cofactor. In terms of tissue distribution, mostly expressed in roots, leaves and flowers, also present in stems, and, at low levels, in seeds.

Its subcellular location is the mitochondrion. The catalysed reaction is citrate = D-threo-isocitrate. Its pathway is carbohydrate metabolism; tricarboxylic acid cycle; isocitrate from oxaloacetate: step 2/2. In terms of biological role, catalyzes the isomerization of citrate to isocitrate via cis-aconitate. Contributes to oxidative stress tolerance. Involved in acetate assimilation. The polypeptide is Aconitate hydratase 2, mitochondrial (Arabidopsis thaliana (Mouse-ear cress)).